The primary structure comprises 145 residues: uncharacterized protein (145 aa).

The substrate site is built by Val97 and Asn121.

Belongs to the D-isomer specific 2-hydroxyacid dehydrogenase family. FDH subfamily.

This is an uncharacterized protein from Saccharomyces cerevisiae (strain ATCC 204508 / S288c) (Baker's yeast).